The sequence spans 71 residues: Large ribosomal subunit protein bL31 (71 aa).

Residues Cys16, Cys18, Cys37, and Cys40 each contribute to the Zn(2+) site.

The protein belongs to the bacterial ribosomal protein bL31 family. Type A subfamily. As to quaternary structure, part of the 50S ribosomal subunit. Requires Zn(2+) as cofactor.

In terms of biological role, binds the 23S rRNA. In Pseudomonas putida (strain GB-1), this protein is Large ribosomal subunit protein bL31.